The following is a 562-amino-acid chain: NAD-dependent malic enzyme (562 aa).

Catalysis depends on Tyr-101, which acts as the Proton donor. An NAD(+)-binding site is contributed by Arg-154. Catalysis depends on Lys-172, which acts as the Proton acceptor. The a divalent metal cation site is built by Glu-243, Asp-244, and Asp-267. The NAD(+) site is built by Asp-267 and Asn-415.

It belongs to the malic enzymes family. As to quaternary structure, homotetramer. Mg(2+) is required as a cofactor. It depends on Mn(2+) as a cofactor.

It carries out the reaction (S)-malate + NAD(+) = pyruvate + CO2 + NADH. The catalysed reaction is oxaloacetate + H(+) = pyruvate + CO2. The protein is NAD-dependent malic enzyme of Colwellia psychrerythraea (strain 34H / ATCC BAA-681) (Vibrio psychroerythus).